Here is a 300-residue protein sequence, read N- to C-terminus: E3 ubiquitin-protein ligase RNF212B (300 aa).

An RING-type zinc finger spans residues 6 to 40 (CNQCFRKDGAHFFVTSCGHIFCKKCVTLEKCAVCG). The stretch at 87 to 124 (LLIAFYKHRITKLETAMQEAQQALVSQDKELSVLRKEN) forms a coiled coil. A disordered region spans residues 141-232 (YQGSRSITPR…SYRTSSASSG (92 aa)). Over residues 155–165 (TSPSQSVTPRP) the composition is skewed to polar residues. Positions 166-182 (SFQHSSQVVSRSSSAES) are enriched in low complexity. A compositionally biased stretch (gly residues) spans 191–200 (GSLGQGGRGL). Polar residues predominate over residues 211–232 (NETPSPASTHSLSYRTSSASSG).

In terms of assembly, homodimer. In terms of processing, autoubiquitinated.

The protein localises to the chromosome. It catalyses the reaction S-ubiquitinyl-[E2 ubiquitin-conjugating enzyme]-L-cysteine + [acceptor protein]-L-lysine = [E2 ubiquitin-conjugating enzyme]-L-cysteine + N(6)-ubiquitinyl-[acceptor protein]-L-lysine.. It participates in protein modification; protein ubiquitination. Functionally, ubiquitin E3 ligase that acts as a crucial factor for crossing-over (CO) formation during meiosis. Essential for normal prophase I progression and for ensuring appropriate CO designation in meiosis. Recruits key components of the cross-over machinery either directly ou indirectly, leading to the activation of the MutL-gamma complex. The function of RNF212B in CO designation is dependent on its catalytic activity. The sequence is that of E3 ubiquitin-protein ligase RNF212B (RNF212B) from Homo sapiens (Human).